Reading from the N-terminus, the 416-residue chain is Multifunctional CCA protein (416 aa).

G8 and R11 together coordinate ATP. Residues G8 and R11 each coordinate CTP. D21 and D23 together coordinate Mg(2+). Residues R91, R137, and R140 each coordinate ATP. CTP is bound by residues R91, R137, and R140. The 102-residue stretch at 228-329 (TGVHTLMVLA…VKIFDKADFW (102 aa)) folds into the HD domain.

This sequence belongs to the tRNA nucleotidyltransferase/poly(A) polymerase family. Bacterial CCA-adding enzyme type 1 subfamily. As to quaternary structure, monomer. Can also form homodimers and oligomers. Mg(2+) is required as a cofactor. It depends on Ni(2+) as a cofactor.

It carries out the reaction a tRNA precursor + 2 CTP + ATP = a tRNA with a 3' CCA end + 3 diphosphate. It catalyses the reaction a tRNA with a 3' CCA end + 2 CTP + ATP = a tRNA with a 3' CCACCA end + 3 diphosphate. Its function is as follows. Catalyzes the addition and repair of the essential 3'-terminal CCA sequence in tRNAs without using a nucleic acid template. Adds these three nucleotides in the order of C, C, and A to the tRNA nucleotide-73, using CTP and ATP as substrates and producing inorganic pyrophosphate. tRNA 3'-terminal CCA addition is required both for tRNA processing and repair. Also involved in tRNA surveillance by mediating tandem CCA addition to generate a CCACCA at the 3' terminus of unstable tRNAs. While stable tRNAs receive only 3'-terminal CCA, unstable tRNAs are marked with CCACCA and rapidly degraded. The polypeptide is Multifunctional CCA protein (Shewanella baltica (strain OS185)).